A 282-amino-acid polypeptide reads, in one-letter code: MDNCKILFIGDPHFKVNNIEIIDEFIHQCLEQLTSDIDICVIGGDILHTHERLHTTALNKAINFIDQVRKICPTYILVGNHDYENNQQFLSKRHWMNALKEWTNTFIIDYTSIIKIKNFTFGMVPYVPPGRFVEALNIIDNEWWKNVNCIFAHQEFYGCKMGAIESTEGDKWDHSFPLVISGHIHSEQRPQKNIFYPGSVIQHAFGESEDNGLLLLIFNDPEIGEYPLMVKKILDIPKMRTINVKISDFSTLVLDPKKNERIKIICKGSVESFKAFKKNKVV.

3 residues coordinate a divalent metal cation: D45, N80, and H203.

The protein belongs to the metallophosphoesterase superfamily. IIV-6 244L family.

The polypeptide is Putative phosphoesterase 244L (Invertebrate iridescent virus 6 (IIV-6)).